A 420-amino-acid chain; its full sequence is Protein disulfide isomerase Creld1 (420 aa).

An N-terminal signal peptide occupies residues 1-29; that stretch reads MAPLPPRGLVPSLLWCLSLFLSLPGPVWL. At 30–362 the chain is on the extracellular side; the sequence is QPSPPPHPSP…GFFAEMTEDE (333 aa). Positions 46–49 match the CXXC motif; it reads CHTC. 4 disulfides stabilise this stretch: cysteine 46–cysteine 49, cysteine 155–cysteine 169, cysteine 163–cysteine 181, and cysteine 183–cysteine 192. In terms of domain architecture, EGF-like 1 spans 153 to 193; sequence LPCPGGTERPCGGYGQCEGEGTRGGSGHCDCQAGYGGEACG. N-linked (GlcNAc...) asparagine glycosylation occurs at asparagine 205. FU repeat units follow at residues 208-255 and 268-315; these read HLVC…EQAT and SYEC…VVCP. Residues 278–281 carry the CXXC motif; that stretch reads CLGC. 4 cysteine pairs are disulfide-bonded: cysteine 278–cysteine 281, cysteine 309–cysteine 321, cysteine 314–cysteine 330, and cysteine 332–cysteine 343. The region spanning 305-342 is the EGF-like 2; calcium-binding domain; it reads DVDECETVVCPGENEKCENTEGGYRCVCAEGYRQEDGI. Residues 363-383 form a helical membrane-spanning segment; sequence MVVLQQMFFGVIICALATLAA. Residue lysine 384 is a topological domain, cytoplasmic. A helical membrane pass occupies residues 385 to 405; that stretch reads GDLVFTAIFIGAVAAMTGYWL. Residues 406–420 lie on the Extracellular side of the membrane; sequence SERSDRVLEGFIKGR.

The protein belongs to the CRELD family. As to expression, expressed in myoblast C2C12 cells (at protein level).

It is found in the membrane. It catalyses the reaction Catalyzes the rearrangement of -S-S- bonds in proteins.. Functionally, protein disulfide isomerase. Promotes the localization of acetylcholine receptors (AChRs) to the plasma membrane. The chain is Protein disulfide isomerase Creld1 (Creld1) from Mus musculus (Mouse).